The sequence spans 206 residues: Ribonuclease M5 (206 aa).

One can recognise a Toprim domain in the interval 8-91 (NEVIVVEGRD…AFLNRDEARP (84 aa)). Mg(2+) contacts are provided by E14, D60, and D62.

It belongs to the ribonuclease M5 family. Requires Mg(2+) as cofactor.

It is found in the cytoplasm. It catalyses the reaction Endonucleolytic cleavage of RNA, removing 21 and 42 nucleotides, respectively, from the 5'- and 3'-termini of a 5S-rRNA precursor.. Its function is as follows. Required for correct processing of both the 5' and 3' ends of 5S rRNA precursor. Cleaves both sides of a double-stranded region yielding mature 5S rRNA in one step. The chain is Ribonuclease M5 from Lactococcus lactis subsp. lactis (strain IL1403) (Streptococcus lactis).